Reading from the N-terminus, the 109-residue chain is YTPDDWYRLIQDKYQQIRKTQADSTQNLGERVNDIAFWKECLFHREKAIAQLASDRTRRPNIELCRLVNEVYEVDETIQTLQQRLRDSEDTLQSLAHTKANTLYIDQEK.

It belongs to the tektin family. As to quaternary structure, microtubule inner protein component of sperm flagellar doublet microtubules. Interacts with TEKT1, TEKT2, TEKT4 and TEKT5. Interacts with CCDC38. Post-translationally, N- and O-glycosylated. May be proteolytically processed during the epididymal transit of spermatozoa. In terms of processing, ubiquitinated, leading to its degradation. Deubiquitinated by USP16, promoting its stability.

It is found in the cytoplasm. The protein localises to the cytoskeleton. The protein resides in the cilium axoneme. Its subcellular location is the flagellum axoneme. It localises to the cytoplasmic vesicle. It is found in the secretory vesicle. The protein localises to the acrosome outer membrane. Microtubule inner protein (MIP) part of the dynein-decorated doublet microtubules (DMTs) in cilia and flagellar axoneme. Forms filamentous polymers in the walls of ciliary and flagellar microtubules. Required for normal sperm mobility. The protein is Tektin-3 of Mesocricetus auratus (Golden hamster).